The following is a 291-amino-acid chain: Elongation factor Ts (291 aa).

Residues 79-82 form an involved in Mg(2+) ion dislocation from EF-Tu region; the sequence is TDFV.

Belongs to the EF-Ts family.

Its subcellular location is the cytoplasm. In terms of biological role, associates with the EF-Tu.GDP complex and induces the exchange of GDP to GTP. It remains bound to the aminoacyl-tRNA.EF-Tu.GTP complex up to the GTP hydrolysis stage on the ribosome. In Anaplasma marginale (strain St. Maries), this protein is Elongation factor Ts.